The chain runs to 380 residues: uncharacterized protein (380 aa).

Residues 256 to 301 (DKEEKIQKSYQYQTELITELQGRIAELEKENQSLKENVKEPETSKP) are a coiled coil.

This is an uncharacterized protein from Pasteurella multocida (strain Pm70).